We begin with the raw amino-acid sequence, 137 residues long: Nucleoside diphosphate kinase (137 aa).

ATP is bound by residues lysine 9, phenylalanine 57, arginine 85, threonine 91, arginine 102, and asparagine 112. Residue histidine 115 is the Pros-phosphohistidine intermediate of the active site.

Belongs to the NDK family. In terms of assembly, homotetramer. Mg(2+) serves as cofactor.

Its subcellular location is the cytoplasm. The enzyme catalyses a 2'-deoxyribonucleoside 5'-diphosphate + ATP = a 2'-deoxyribonucleoside 5'-triphosphate + ADP. It carries out the reaction a ribonucleoside 5'-diphosphate + ATP = a ribonucleoside 5'-triphosphate + ADP. In terms of biological role, major role in the synthesis of nucleoside triphosphates other than ATP. The ATP gamma phosphate is transferred to the NDP beta phosphate via a ping-pong mechanism, using a phosphorylated active-site intermediate. In Campylobacter jejuni subsp. jejuni serotype O:6 (strain 81116 / NCTC 11828), this protein is Nucleoside diphosphate kinase.